Reading from the N-terminus, the 633-residue chain is Proline-rich receptor-like protein kinase PERK4 (633 aa).

Residues 1-29 are compositionally biased toward low complexity; that stretch reads MASSPESAPPTNSTSSPSPPSNTNSTTSS. The interval 1–145 is disordered; the sequence is MASSPESAPP…GSSGGGGGGR (145 aa). Over 1 to 151 the chain is Extracellular; it reads MASSPESAPP…GGGRSNTNTA (151 aa). N-linked (GlcNAc...) asparagine glycans are attached at residues Asn12 and Asn24. Pro residues-rich tracts occupy residues 30-41 and 48-65; these read PPAPSPPSPTPP and SPPPDSTSPPAPQAPNPP. Asn66 carries N-linked (GlcNAc...) asparagine glycosylation. Gly residues predominate over residues 77–90; it reads QGGGGERGNGGNNG. A compositionally biased stretch (low complexity) spans 106–135; that stretch reads SRSNGDNGGSRSSPPGDTGGSRSDNPPSSG. The segment covering 136 to 145 has biased composition (gly residues); it reads GSSGGGGGGR. A helical transmembrane segment spans residues 152–172; sequence IIVGVLVGAGLLMIVLIIVCL. Topologically, residues 173-633 are cytoplasmic; that stretch reads RRKKKRKDSF…MGTKSPTPPK (461 aa). Positions 193–222 are enriched in low complexity; that stretch reads QYYGNNNNNNASQNYPNWHLNSQGQNQQST. A disordered region spans residues 193-255; that stretch reads QYYGNNNNNN…SMYSGPSRPV (63 aa). Thr273 is subject to Phosphothreonine. Residues 284–562 enclose the Protein kinase domain; the sequence is FTDANLLGQG…VRALEGEVSL (279 aa). Residues 290-298 and Lys312 each bind ATP; that span reads LGQGGFGYV. Position 357 is a phosphotyrosine (Tyr357). Residue Asp408 is the Proton acceptor of the active site. Ser441 is modified (phosphoserine). Phosphothreonine occurs at positions 442 and 447. Tyr455 carries the phosphotyrosine modification. Residues 608-619 are compositionally biased toward polar residues; the sequence is FPVSDCEGTSSN. The interval 608-633 is disordered; it reads FPVSDCEGTSSNDSRDMGTKSPTPPK.

This sequence belongs to the protein kinase superfamily. Ser/Thr protein kinase family. As to expression, mostly expressed in inflorescence bolts. Also present in roots, stems, germinated seeds, cotyledons, pollen, stamen and stigma.

The protein localises to the cell membrane. The enzyme catalyses L-seryl-[protein] + ATP = O-phospho-L-seryl-[protein] + ADP + H(+). It carries out the reaction L-threonyl-[protein] + ATP = O-phospho-L-threonyl-[protein] + ADP + H(+). Its activity is regulated as follows. Activated by ABA and Ca(2+). Required during abscisic acid (ABA)-mediated activation of Ca(2+) channels. Regulates ABA signaling pathways. Modulates the expression of genes related to cell elongation and ABA signaling during root growth. The chain is Proline-rich receptor-like protein kinase PERK4 (PERK4) from Arabidopsis thaliana (Mouse-ear cress).